The following is a 704-amino-acid chain: DNA-binding protein RFX2 (704 aa).

The segment at 1 to 39 (MQNSEGGADSPASVALRPSAAAPPVPASPQRVLVQAASS) is disordered. The span at 10-20 (SPASVALRPSA) shows a compositional bias: low complexity. Serine 28 is modified (phosphoserine). A DNA-binding region (RFX-type winged-helix) is located at residues 199–274 (HLQWLLDNYE…YHYYGIRLKP (76 aa)). Residues 292 to 334 (QQPMHQKPRYRPAQKTDSLGDSSSHSGLHSTPEQTTAAQNQHH) are disordered. Residues 307-334 (TDSLGDSSSHSGLHSTPEQTTAAQNQHH) show a composition bias toward low complexity. Serine 416 is subject to Phosphoserine.

The protein belongs to the RFX family. Homodimer; probably only forms homodimers in testis. Heterodimer; heterodimerizes with RFX1 and RFX3.

The protein resides in the nucleus. The protein localises to the cytoplasm. In terms of biological role, transcription factor that acts as a key regulator of spermatogenesis. Acts by regulating expression of genes required for the haploid phase during spermiogenesis, such as genes required for cilium assembly and function. Recognizes and binds the X-box, a regulatory motif with DNA sequence 5'-GTNRCC(0-3N)RGYAAC-3' present on promoters. Probably activates transcription of the testis-specific histone gene H1-6. The sequence is that of DNA-binding protein RFX2 (RFX2) from Pongo abelii (Sumatran orangutan).